Consider the following 323-residue polypeptide: tRNA U34 carboxymethyltransferase (323 aa).

Carboxy-S-adenosyl-L-methionine is bound by residues Lys-91, Trp-105, Lys-110, Gly-130, 181-182 (IE), Met-196, Tyr-200, and Arg-315.

It belongs to the class I-like SAM-binding methyltransferase superfamily. CmoB family. In terms of assembly, homotetramer.

The catalysed reaction is carboxy-S-adenosyl-L-methionine + 5-hydroxyuridine(34) in tRNA = 5-carboxymethoxyuridine(34) in tRNA + S-adenosyl-L-homocysteine + H(+). Catalyzes carboxymethyl transfer from carboxy-S-adenosyl-L-methionine (Cx-SAM) to 5-hydroxyuridine (ho5U) to form 5-carboxymethoxyuridine (cmo5U) at position 34 in tRNAs. This is tRNA U34 carboxymethyltransferase from Yersinia pseudotuberculosis serotype O:1b (strain IP 31758).